The sequence spans 194 residues: Large ribosomal subunit protein uL5 (194 aa).

The protein belongs to the universal ribosomal protein uL5 family. In terms of assembly, part of the 50S ribosomal subunit; part of the 5S rRNA/L5/L18/L25 subcomplex. Contacts the 5S rRNA and the P site tRNA. Forms a bridge to the 30S subunit in the 70S ribosome.

Its function is as follows. This is one of the proteins that bind and probably mediate the attachment of the 5S RNA into the large ribosomal subunit, where it forms part of the central protuberance. In the 70S ribosome it contacts protein S13 of the 30S subunit (bridge B1b), connecting the 2 subunits; this bridge is implicated in subunit movement. Contacts the P site tRNA; the 5S rRNA and some of its associated proteins might help stabilize positioning of ribosome-bound tRNAs. The protein is Large ribosomal subunit protein uL5 of Chlorobium luteolum (strain DSM 273 / BCRC 81028 / 2530) (Pelodictyon luteolum).